The sequence spans 846 residues: Protein kintoun (846 aa).

4 disordered regions span residues threonine 216–glutamate 240, leucine 372–alanine 405, glutamine 574–cysteine 631, and lysine 762–aspartate 846. The segment covering leucine 372–valine 382 has biased composition (basic and acidic residues). Residue serine 380 is modified to Phosphoserine. Over residues proline 391–leucine 400 the composition is skewed to acidic residues. The span at glycine 583–histidine 603 shows a compositional bias: basic and acidic residues. Composition is skewed to basic residues over residues lysine 611–lysine 622 and lysine 762–glutamine 776. Phosphoserine is present on serine 780. Residues leucine 795 to asparagine 809 are compositionally biased toward polar residues.

This sequence belongs to the PIH1 family. Kintoun subfamily. Interacts with Pp1alpha-96A, Pp1-87B, Pp1-13C and flw.

The protein localises to the cytoplasm. Required for cytoplasmic pre-assembly of axonemal dyneins, thereby playing a central role in motility in cilia and flagella. Involved in pre-assembly of dynein arm complexes in the cytoplasm before intraflagellar transport loads them for the ciliary compartment. The sequence is that of Protein kintoun from Drosophila yakuba (Fruit fly).